The chain runs to 630 residues: Elongation factor 4 (630 aa).

Positions 1 to 22 are disordered; sequence MTVARNRAGAGPGKGSPISSFA. One can recognise a tr-type G domain in the interval 30–211; the sequence is ARIRNFCIIA…EVVRQVPAPV (182 aa). GTP is bound by residues 42–47 and 158–161; these read DHGKST and NKID.

The protein belongs to the TRAFAC class translation factor GTPase superfamily. Classic translation factor GTPase family. LepA subfamily.

The protein localises to the cell membrane. It catalyses the reaction GTP + H2O = GDP + phosphate + H(+). In terms of biological role, required for accurate and efficient protein synthesis under certain stress conditions. May act as a fidelity factor of the translation reaction, by catalyzing a one-codon backward translocation of tRNAs on improperly translocated ribosomes. Back-translocation proceeds from a post-translocation (POST) complex to a pre-translocation (PRE) complex, thus giving elongation factor G a second chance to translocate the tRNAs correctly. Binds to ribosomes in a GTP-dependent manner. The protein is Elongation factor 4 of Rhodococcus opacus (strain B4).